Here is a 279-residue protein sequence, read N- to C-terminus: DegV domain-containing protein lin1977 (279 aa).

Residues 4–278 form the DegV domain; that stretch reads IKIITDSTAG…TGAFAFMYYT (275 aa). The hexadecanoate site is built by Ser62 and Ser94.

In terms of biological role, may bind long-chain fatty acids, such as palmitate, and may play a role in lipid transport or fatty acid metabolism. In Listeria innocua serovar 6a (strain ATCC BAA-680 / CLIP 11262), this protein is DegV domain-containing protein lin1977.